The chain runs to 463 residues: Nitrate/nitrite antiporter NarK (463 aa).

The Cytoplasmic portion of the chain corresponds to Met1–Asn37. The chain crosses the membrane as a helical span at residues Leu38–Ala59. Residues Val60–Gln73 lie on the Periplasmic side of the membrane. A helical membrane pass occupies residues Leu74–Met95. Arg89 contributes to the nitrate binding site. Arg89 is a nitrite binding site. Residues Val96–Arg102 lie on the Cytoplasmic side of the membrane. A helical membrane pass occupies residues Arg103–Ala122. The Periplasmic portion of the chain corresponds to Val123–Tyr130. The helical transmembrane segment at Ser131–Met151 threads the bilayer. Residues Ala152 to Ala166 are Cytoplasmic-facing. Residues Leu167 to Val189 traverse the membrane as a helical segment. Asn175 is a binding site for nitrate. Over Ser190–Tyr211 the chain is Periplasmic. The helical transmembrane segment at Leu212–Gly233 threads the bilayer. Topologically, residues Met234–Arg253 are cytoplasmic. The chain crosses the membrane as a helical span at residues Gly254–Ser281. Position 263 (Tyr263) interacts with nitrate. Tyr263 contributes to the nitrite binding site. The Periplasmic segment spans residues Lys282–Gln289. A helical membrane pass occupies residues Ile290–Ser312. Residues Asp313–Gly316 lie on the Cytoplasmic side of the membrane. Residues Gly317–Thr338 form a helical membrane-spanning segment. The Periplasmic portion of the chain corresponds to Leu339 to Ser347. Residues Phe348–Ile373 traverse the membrane as a helical segment. Topologically, residues Ser374 to Ala405 are cytoplasmic. A helical membrane pass occupies residues Ala406 to Ser427. Ser411 contacts nitrate. The Periplasmic segment spans residues Ser428–Pro435. The chain crosses the membrane as a helical span at residues Val436–Gly458. Residues Arg459–Lys463 are Cytoplasmic-facing.

It belongs to the major facilitator superfamily. Nitrate/nitrite porter (TC 2.A.1.8) family.

It is found in the cell inner membrane. It carries out the reaction nitrate(in) + nitrite(out) = nitrate(out) + nitrite(in). Functionally, catalyzes nitrate uptake, nitrite uptake and nitrite export across the cytoplasmic membrane. Functions as a nitrate/nitrite exchanger, and protons are unlikely to be co-transported. The polypeptide is Nitrate/nitrite antiporter NarK (Escherichia coli (strain K12)).